The sequence spans 247 residues: 3,4-dihydroxy-2-butanone 4-phosphate synthase (247 aa).

Residues 38 to 39 (RE), Asp43, 179 to 183 (RMGQT), and Glu203 each bind D-ribulose 5-phosphate. Residue Glu39 coordinates Mg(2+).

The protein belongs to the DHBP synthase family. As to quaternary structure, homodimer. It depends on Mg(2+) as a cofactor. Mn(2+) serves as cofactor.

The catalysed reaction is D-ribulose 5-phosphate = (2S)-2-hydroxy-3-oxobutyl phosphate + formate + H(+). Its pathway is cofactor biosynthesis; riboflavin biosynthesis; 2-hydroxy-3-oxobutyl phosphate from D-ribulose 5-phosphate: step 1/1. Catalyzes the conversion of D-ribulose 5-phosphate to formate and 3,4-dihydroxy-2-butanone 4-phosphate. In Methanosarcina acetivorans (strain ATCC 35395 / DSM 2834 / JCM 12185 / C2A), this protein is 3,4-dihydroxy-2-butanone 4-phosphate synthase.